We begin with the raw amino-acid sequence, 146 residues long: Transcription antitermination protein NusB (146 aa).

This sequence belongs to the NusB family.

Its function is as follows. Involved in transcription antitermination. Required for transcription of ribosomal RNA (rRNA) genes. Binds specifically to the boxA antiterminator sequence of the ribosomal RNA (rrn) operons. The sequence is that of Transcription antitermination protein NusB from Koribacter versatilis (strain Ellin345).